The chain runs to 323 residues: Elongation factor P--(R)-beta-lysine ligase (323 aa).

76–78 (SPE) is a substrate binding site. ATP contacts are provided by residues 100 to 102 (RNE) and Asn109. Substrate is bound at residue Tyr118. 242–243 (EL) provides a ligand contact to ATP. Glu249 serves as a coordination point for substrate. Gly298 contributes to the ATP binding site.

Belongs to the class-II aminoacyl-tRNA synthetase family. EpmA subfamily. As to quaternary structure, homodimer.

It carries out the reaction D-beta-lysine + L-lysyl-[protein] + ATP = N(6)-((3R)-3,6-diaminohexanoyl)-L-lysyl-[protein] + AMP + diphosphate + H(+). Functionally, with EpmB is involved in the beta-lysylation step of the post-translational modification of translation elongation factor P (EF-P). Catalyzes the ATP-dependent activation of (R)-beta-lysine produced by EpmB, forming a lysyl-adenylate, from which the beta-lysyl moiety is then transferred to the epsilon-amino group of a conserved specific lysine residue in EF-P. The polypeptide is Elongation factor P--(R)-beta-lysine ligase (Haemophilus influenzae (strain ATCC 51907 / DSM 11121 / KW20 / Rd)).